Reading from the N-terminus, the 1332-residue chain is SAGA complex subunit SPT7 (1332 aa).

Position 78 is a phosphothreonine; by ATM or ATR (T78). Disordered stretches follow at residues E80–E118, V209–S268, and I331–S384. The residue at position 88 (S88) is a Phosphoserine. Residues N106 to E118 are compositionally biased toward low complexity. Positions I217–A233 are enriched in basic and acidic residues. Positions E234–S249 are enriched in acidic residues. A compositionally biased stretch (basic and acidic residues) spans T250–K260. The span at A345–D360 shows a compositional bias: acidic residues. Positions N362–T376 are enriched in polar residues. The Bromo domain occupies I440–I546. The span at K566–V578 shows a compositional bias: acidic residues. 2 disordered regions span residues K566–E724 and G1286–Q1332. Composition is skewed to basic and acidic residues over residues L593–T634 and N644–G697. Acidic residues predominate over residues E698–V716. At S1293 the chain carries Phosphoserine. A compositionally biased stretch (polar residues) spans N1316 to Q1332.

In terms of assembly, component of the 1.8 MDa SAGA (Spt-Ada-Gcn5 acetyltransferase) complex, which is composed of 19 subunits TRA1, SPT7, TAF5, NGG1/ADA3, SGF73, SPT20/ADA5, SPT8, TAF12, TAF6, HFI1/ADA1, UBP8, GCN5, ADA2, SPT3, SGF29, TAF10, TAF9, SGF11 and SUS1. The SAGA complex is composed of 4 modules, namely the HAT (histone acetyltransferase) module (GCN5, ADA2, NGG1/ADA3 and SGF29), the DUB (deubiquitinating) module (UBP8, SGF11, SGF73 and SUS1), the core or TAF (TBP-associated factor) module (TAF5, TAF6, TAF9, TAF10 and TAF12), and the Tra1 or SPT (Suppressor of Ty) module (TRA1, HFI1/ADA1, SPT3, SPT7, SPT8 and SPT20/ADA5). The Tra1/SPT module binds activators, the core module recruits TBP (TATA-binding protein), the HAT module contains the histone H3 acetyltransferase GCN5, and the DUB module comprises the histone H2B deubiquitinase UBP8. Also identified in an altered form of SAGA, named SALSA (SAGA altered, Spt8 absent) or SLIK (SAGA-like) complex, which contains a C-terminal truncated form of SPT7 and is missing SPT8. However, it has been shown that the SAGA and SAGA-like SALSA/SLIK transcriptional coactivators are structurally and biochemically equivalent. Identified in the Ada.spt complex with NGG1/ADA3 and TRA1. Post-translationally, protease PEP4 directly cleaves the C-terminus of SPT7(SAGA) to form SPT7(SLIK) within the SAGA complex in the nucleus.

The protein localises to the nucleus. Its function is as follows. Component of the transcription coactivator SAGA complex. SAGA acts as a general cofactor required for essentially all RNA polymerase II transcription. At the promoters, SAGA is required for transcription pre-initiation complex (PIC) recruitment. It influences RNA polymerase II transcriptional activity through different activities such as TBP interaction (via core/TAF module) and promoter selectivity, interaction with transcription activators (via Tra1/SPT module), and chromatin modification through histone acetylation (via HAT module) and deubiquitination (via DUB module). SAGA preferentially acetylates histones H3 (to form H3K9ac, H3K14ac, H3K18ac and H3K23ac) and H2B and deubiquitinates histone H2B. SAGA interacts with DNA via upstream activating sequences (UASs). Also identified in a modified version of SAGA named SALSA or SLIK. The cleavage of SPT7 and the absence of the SPT8 subunit in SLIK neither drive any major conformational differences in its structure compared with SAGA, nor significantly affect HAT, DUB, or DNA-binding activities. In Saccharomyces cerevisiae (strain ATCC 204508 / S288c) (Baker's yeast), this protein is SAGA complex subunit SPT7 (SPT7).